The chain runs to 129 residues: Large ribosomal subunit protein bL12 (129 aa).

It belongs to the bacterial ribosomal protein bL12 family. In terms of assembly, homodimer. Part of the ribosomal stalk of the 50S ribosomal subunit. Forms a multimeric L10(L12)X complex, where L10 forms an elongated spine to which 2 to 4 L12 dimers bind in a sequential fashion. Binds GTP-bound translation factors.

Forms part of the ribosomal stalk which helps the ribosome interact with GTP-bound translation factors. Is thus essential for accurate translation. The polypeptide is Large ribosomal subunit protein bL12 (Pelotomaculum thermopropionicum (strain DSM 13744 / JCM 10971 / SI)).